The sequence spans 1111 residues: Kinesin-like protein KIP1 (1111 aa).

The segment covering 1–11 has biased composition (polar residues); that stretch reads MARSSLPNRRT. The segment at 1–34 is disordered; sequence MARSSLPNRRTAQFEANKRRTIAHAPSPSLSNGM. Residues 52-410 form the Kinesin motor domain; sequence NIHVYVRCRS…LEYATRAKSI (359 aa). 141 to 148 lines the ATP pocket; that stretch reads GQTGTGKT. Coiled-coil stretches lie at residues 424 to 510, 648 to 670, 710 to 780, and 808 to 828; these read TCLK…IIQN, KDLN…DIKS, KLIK…DQDI, and HNAE…TNDL. Positions 1007-1016 are enriched in basic and acidic residues; it reads AENKSKDDTS. The interval 1007–1111 is disordered; sequence AENKSKDDTS…DILQNKKLHQ (105 aa). Polar residues-rich tracts occupy residues 1017–1038 and 1057–1082; these read NSRT…QFSP and SINS…SQNN.

Belongs to the TRAFAC class myosin-kinesin ATPase superfamily. Kinesin family. BimC subfamily. Might be dimeric.

It localises to the cytoplasm. Its subcellular location is the cytoskeleton. The protein resides in the spindle. Its function is as follows. Required for assembly of the mitotic spindle. Interacts with spindle microtubules to produce an outwardly directed force acting upon the poles. Following spindle assembly, CIN8 and KIP1 apparently act to oppose a force that draws separated poles back together. This force seems to be mediate by KAR3. The sequence is that of Kinesin-like protein KIP1 (KIP1) from Saccharomyces cerevisiae (strain ATCC 204508 / S288c) (Baker's yeast).